Reading from the N-terminus, the 436-residue chain is tRNA(Ile)-lysidine synthase (436 aa).

Ser-25–Ser-30 contacts ATP.

The protein belongs to the tRNA(Ile)-lysidine synthase family.

The protein resides in the cytoplasm. It carries out the reaction cytidine(34) in tRNA(Ile2) + L-lysine + ATP = lysidine(34) in tRNA(Ile2) + AMP + diphosphate + H(+). Its function is as follows. Ligates lysine onto the cytidine present at position 34 of the AUA codon-specific tRNA(Ile) that contains the anticodon CAU, in an ATP-dependent manner. Cytidine is converted to lysidine, thus changing the amino acid specificity of the tRNA from methionine to isoleucine. This Serratia proteamaculans (strain 568) protein is tRNA(Ile)-lysidine synthase.